Reading from the N-terminus, the 439-residue chain is Acetyl esterase Axe7A (439 aa).

The N-terminal stretch at 1 to 31 (MFNFAPKQTTEMKKLLFTLVFVLGSMATALA) is a signal peptide. The Nucleophile role is filled by Ser-309. Residues Asp-391 and His-420 each act as charge relay system in the active site.

Belongs to the carbohydrate esterase 7 family.

Its pathway is glycan degradation; xylan degradation. In terms of biological role, involved in degradation of plant cell wall polysaccharides. Has acetyl esterase activity towards a broad range of substrates including xylose-tetraacetate, 4-O-methylumbelliferyl acetate, glucose-pentaacetate, cephalosporin C, and acetylated xylo-oligosaccharides smaller than xylo-heptaose. Displays no detectable activity on polymeric acetylated xylan. This Xylanibacter ruminicola (strain ATCC 19189 / DSM 19721 / CIP 105475 / JCM 8958 / 23) (Prevotella ruminicola) protein is Acetyl esterase Axe7A.